The following is a 167-amino-acid chain: Phospholipase A2 heteromtoxin (167 aa).

Residues tryptophan 38, glycine 40, and glycine 42 each contribute to the Ca(2+) site. Intrachain disulfides connect cysteine 39/cysteine 61, cysteine 60/cysteine 99, cysteine 67/cysteine 92, cysteine 90/cysteine 127, and cysteine 132/cysteine 144. Histidine 64 is a catalytic residue. Residue aspartate 65 participates in Ca(2+) binding. Residues 136–140 (GRSAR) constitute a propeptide that is removed on maturation.

This sequence belongs to the phospholipase A2 family. Group III subfamily. In terms of assembly, heterodimer composed of a large and a small subunits; disulfide-linked. Ca(2+) serves as cofactor. Expressed by the venom gland.

The protein resides in the secreted. The enzyme catalyses a 1,2-diacyl-sn-glycero-3-phosphocholine + H2O = a 1-acyl-sn-glycero-3-phosphocholine + a fatty acid + H(+). Its function is as follows. Phospholipase toxin, which catalyzes the calcium-dependent hydrolysis of the 2-acyl groups in 3-sn-phosphoglycerides. Inhibits both skeletal (RYR1) and cardiac (RYR2) ryanodine receptors (calcium release channels). Probably blocks ryanodine receptors by generating a lipid product. This Heterometrus laoticus (Thai giant scorpion) protein is Phospholipase A2 heteromtoxin.